Consider the following 332-residue polypeptide: Malate dehydrogenase, cytoplasmic (332 aa).

NAD(+) contacts are provided by residues 16–17 (QI), D43, and G90. Position 99 (R99) interacts with oxaloacetate. Residues Q113 and N132 each coordinate NAD(+). Residues N132, R163, H188, and S243 each contribute to the oxaloacetate site. Catalysis depends on H188, which acts as the Proton acceptor.

Belongs to the LDH/MDH superfamily. MDH type 2 family. As to quaternary structure, homodimer.

It localises to the cytoplasm. It catalyses the reaction (S)-malate + NAD(+) = oxaloacetate + NADH + H(+). This chain is Malate dehydrogenase, cytoplasmic (NR1), found in Beta vulgaris (Sugar beet).